We begin with the raw amino-acid sequence, 254 residues long: Translation initiation factor 2 subunit alpha (254 aa).

The S1 motif domain maps to 10-81 (GDLVVVKITE…ERKVVDLSLK (72 aa)).

The protein belongs to the eIF-2-alpha family. Heterotrimer composed of an alpha, a beta and a gamma chain.

Functionally, eIF-2 functions in the early steps of protein synthesis by forming a ternary complex with GTP and initiator tRNA. The protein is Translation initiation factor 2 subunit alpha of Thermoplasma acidophilum (strain ATCC 25905 / DSM 1728 / JCM 9062 / NBRC 15155 / AMRC-C165).